The primary structure comprises 372 residues: Putative glutamate--cysteine ligase 2 (372 aa).

It belongs to the glutamate--cysteine ligase type 2 family. YbdK subfamily.

The enzyme catalyses L-cysteine + L-glutamate + ATP = gamma-L-glutamyl-L-cysteine + ADP + phosphate + H(+). In terms of biological role, ATP-dependent carboxylate-amine ligase which exhibits weak glutamate--cysteine ligase activity. The chain is Putative glutamate--cysteine ligase 2 from Gloeobacter violaceus (strain ATCC 29082 / PCC 7421).